A 388-amino-acid polypeptide reads, in one-letter code: Succinyl-diaminopimelate desuccinylase (388 aa).

A Zn(2+)-binding site is contributed by histidine 72. Aspartate 74 is a catalytic residue. Aspartate 105 is a binding site for Zn(2+). The Proton acceptor role is filled by glutamate 139. Residues glutamate 140, glutamate 168, and histidine 353 each contribute to the Zn(2+) site.

The protein belongs to the peptidase M20A family. DapE subfamily. As to quaternary structure, homodimer. The cofactor is Zn(2+). Co(2+) is required as a cofactor.

The catalysed reaction is N-succinyl-(2S,6S)-2,6-diaminopimelate + H2O = (2S,6S)-2,6-diaminopimelate + succinate. It participates in amino-acid biosynthesis; L-lysine biosynthesis via DAP pathway; LL-2,6-diaminopimelate from (S)-tetrahydrodipicolinate (succinylase route): step 3/3. Catalyzes the hydrolysis of N-succinyl-L,L-diaminopimelic acid (SDAP), forming succinate and LL-2,6-diaminopimelate (DAP), an intermediate involved in the bacterial biosynthesis of lysine and meso-diaminopimelic acid, an essential component of bacterial cell walls. The protein is Succinyl-diaminopimelate desuccinylase of Orientia tsutsugamushi (strain Ikeda) (Rickettsia tsutsugamushi).